Reading from the N-terminus, the 450-residue chain is Phosphoglucosamine mutase (450 aa).

Catalysis depends on serine 101, which acts as the Phosphoserine intermediate. Mg(2+) contacts are provided by serine 101, aspartate 241, aspartate 243, and aspartate 245. The residue at position 101 (serine 101) is a Phosphoserine.

Belongs to the phosphohexose mutase family. Mg(2+) is required as a cofactor. Post-translationally, activated by phosphorylation.

It catalyses the reaction alpha-D-glucosamine 1-phosphate = D-glucosamine 6-phosphate. In terms of biological role, catalyzes the conversion of glucosamine-6-phosphate to glucosamine-1-phosphate. The chain is Phosphoglucosamine mutase from Listeria innocua serovar 6a (strain ATCC BAA-680 / CLIP 11262).